The primary structure comprises 870 residues: S-linalool synthase (870 aa).

Mg(2+)-binding residues include D547, D551, N689, S693, and E697. The DDXXD motif signature appears at 547-551 (DDFFD).

This sequence belongs to the terpene synthase family. The cofactor is Mg(2+). Mn(2+) serves as cofactor. In terms of tissue distribution, highly expressed in cells of the transmitting tract of the stigma and style and in the epidermal cells of petals, as well as in stamens.

It catalyses the reaction (2E)-geranyl diphosphate + H2O = (S)-linalool + diphosphate. Its function is as follows. Involved in the biosynthesis of the acyclic monoterpene S-linalool, a major component of the strong sweet scent of the C.breweri flowers. The polypeptide is S-linalool synthase (LIS) (Clarkia breweri (Fairy fans)).